A 314-amino-acid chain; its full sequence is MNENLDLGNLSTIPIAPEGFKSGFVGIIGRPNVGKSTLMNQLIGQKIAITSPVSQTTRNRLQGILTTDKAQIIFVDTPGIHKPHHTLGKIIVKNAKTAINSVDIILLVVDSSVKSGGGDRYIIDLLKTVNQPVILGLNKSDQQTEKYQEIDESYANLIQDHNWPMIKFSALTGDGVETLQNTLIEQLEPGPYYYPPDLITDQPERFIMAELIREQILQLTRQEVPHSVAVTIEKVEESPKITKIFAAINVERSSQKGIIIGQKGNMLKAIGTTAREQIQKLIAGEVFLKLFVKVEPQWRQSNLRLAEFGYRVEE.

Residues 21 to 189 enclose the Era-type G domain; it reads KSGFVGIIGR…QNTLIEQLEP (169 aa). Positions 29 to 36 are G1; sequence GRPNVGKS. 29–36 lines the GTP pocket; that stretch reads GRPNVGKS. The tract at residues 55-59 is G2; the sequence is QTTRN. Residues 76-79 form a G3 region; the sequence is DTPG. Residues 76–80 and 138–141 contribute to the GTP site; these read DTPGI and NKSD. Residues 138 to 141 are G4; the sequence is NKSD. The interval 168–170 is G5; the sequence is FSA. In terms of domain architecture, KH type-2 spans 212 to 296; that stretch reads IREQILQLTR…FLKLFVKVEP (85 aa).

This sequence belongs to the TRAFAC class TrmE-Era-EngA-EngB-Septin-like GTPase superfamily. Era GTPase family. As to quaternary structure, monomer.

Its subcellular location is the cytoplasm. The protein resides in the cell inner membrane. Functionally, an essential GTPase that binds both GDP and GTP, with rapid nucleotide exchange. Plays a role in 16S rRNA processing and 30S ribosomal subunit biogenesis and possibly also in cell cycle regulation and energy metabolism. This is GTPase Era from Crocosphaera subtropica (strain ATCC 51142 / BH68) (Cyanothece sp. (strain ATCC 51142)).